The chain runs to 292 residues: E3 ubiquitin-protein ligase RNF144A (292 aa).

The tract at residues 16–236 is TRIAD supradomain; sequence PLVSCKLCLG…YDKGPCRNKL (221 aa). C20, C23, C43, C46, C111, C116, C135, C138, C143, C146, H151, C156, C185, and C188 together coordinate Zn(2+). The RING-type 1 zinc-finger motif lies at 20–70; the sequence is CKLCLGEYPAEQMTTIAQCQCIFCTLCLKQYVELLIKEGLETAISCPDAAC. The IBR-type zinc-finger motif lies at 91–156; that stretch reads QRYKKLQFER…KARWHPGQGC (66 aa). The RING-type 2; atypical zinc-finger motif lies at 185-214; it reads CPKCRVYIERDEGCAQMMCKNCKHAFCWYC. The active site involves C198. Residues C203, C206, C211, C214, H226, and C232 each coordinate Zn(2+). The helical transmembrane segment at 250 to 270 threads the bilayer; the sequence is VVGIFAGFGLLLLVASPFLLL.

This sequence belongs to the RBR family. RNF144 subfamily. As to quaternary structure, self-associates. Interacts with UBE2L3. In terms of processing, autoubiquitinated.

The protein resides in the cell membrane. The protein localises to the cytoplasmic vesicle membrane. The enzyme catalyses [E2 ubiquitin-conjugating enzyme]-S-ubiquitinyl-L-cysteine + [acceptor protein]-L-lysine = [E2 ubiquitin-conjugating enzyme]-L-cysteine + [acceptor protein]-N(6)-ubiquitinyl-L-lysine.. It participates in protein modification; protein ubiquitination. In terms of biological role, E3 ubiquitin-protein ligase which accepts ubiquitin from E2 ubiquitin-conjugating enzymes UBE2L3 and UBE2L6 in the form of a thioester and then directly transfers the ubiquitin to targeted substrates. Mediates the ubiquitination and degradation of the DNA damage kinase PRKDC during DNA damage. Positively regulates DNA virus or exogenous cytosolic DNA-triggered innate immune response by mediating STING1 ubiquitination and increasing its 'Lys-6'-linked ubiquitination and translocation from the endoplasmic reticulum to the Golgi leading to downstream signaling pathways. Plays a positive role in EGF-dependent cell proliferation by prolonging EGF/EGFR signaling during EGF stimulation through EGFR ubiquitination. Increases ERK activity independently of EGFR signaling by promoting polyubiquitination and subsequent degradation of VRK3 in the cytosol. The sequence is that of E3 ubiquitin-protein ligase RNF144A (Rnf144a) from Mus musculus (Mouse).